The sequence spans 322 residues: 4-hydroxythreonine-4-phosphate dehydrogenase (322 aa).

Thr132 contributes to the substrate binding site. 3 residues coordinate a divalent metal cation: His160, His205, and His260. Positions 268, 277, and 286 each coordinate substrate.

Belongs to the PdxA family. As to quaternary structure, homodimer. The cofactor is Zn(2+). Mg(2+) is required as a cofactor. Requires Co(2+) as cofactor.

It is found in the cytoplasm. The catalysed reaction is 4-(phosphooxy)-L-threonine + NAD(+) = 3-amino-2-oxopropyl phosphate + CO2 + NADH. Its pathway is cofactor biosynthesis; pyridoxine 5'-phosphate biosynthesis; pyridoxine 5'-phosphate from D-erythrose 4-phosphate: step 4/5. Its function is as follows. Catalyzes the NAD(P)-dependent oxidation of 4-(phosphooxy)-L-threonine (HTP) into 2-amino-3-oxo-4-(phosphooxy)butyric acid which spontaneously decarboxylates to form 3-amino-2-oxopropyl phosphate (AHAP). This chain is 4-hydroxythreonine-4-phosphate dehydrogenase, found in Xanthomonas campestris pv. campestris (strain 8004).